The primary structure comprises 258 residues: Thiamine thiazole synthase (258 aa).

Residues Ser36, 55-56, Gly63, Ile127, and 153-155 each bind NAD(+); these read ER and HVD. Positions 155 and 170 each coordinate Fe cation. Position 224 (Met224) interacts with NAD(+). Arg234 provides a ligand contact to glycine.

The protein belongs to the THI4 family. In terms of assembly, homooctamer; tetramer of dimers. Requires Fe(2+) as cofactor.

It catalyses the reaction hydrogen sulfide + glycine + NAD(+) = ADP-5-ethyl-4-methylthiazole-2-carboxylate + nicotinamide + 3 H2O + H(+). It functions in the pathway cofactor biosynthesis; thiamine diphosphate biosynthesis. Functionally, involved in the biosynthesis of the thiazole moiety of thiamine. Catalyzes the conversion of NAD and glycine to adenosine diphosphate 5-(2-hydroxyethyl)-4-methylthiazole-2-carboxylate (ADT), an adenylated thiazole intermediate, using free sulfide as a source of sulfur. The protein is Thiamine thiazole synthase of Methanothermobacter thermautotrophicus (strain ATCC 29096 / DSM 1053 / JCM 10044 / NBRC 100330 / Delta H) (Methanobacterium thermoautotrophicum).